Here is a 639-residue protein sequence, read N- to C-terminus: 3-oxocholoyl-CoA 4-desaturase (639 aa).

Q101 contributes to the FMN binding site. 155–158 (HAAH) serves as a coordination point for substrate. The active-site Proton donor is Y160. FMN is bound by residues R208, R286, and 308–309 (GR). Residues C332 and C335 each coordinate [4Fe-4S] cluster. Residue Q337 coordinates FAD. Residues C339 and C353 each coordinate [4Fe-4S] cluster. Positions 383, 402, 410, 420, and 447 each coordinate FAD.

The protein in the N-terminal section; belongs to the NADH:flavin oxidoreductase/NADH oxidase family. It depends on FMN as a cofactor. FAD is required as a cofactor. The cofactor is [4Fe-4S] cluster.

It carries out the reaction 7alpha,12alpha-dihydroxy-3-oxochol-24-oyl-CoA + NAD(+) = 7alpha,12alpha-dihydroxy-3-oxochol-4-en-24-oyl-CoA + NADH + H(+). The catalysed reaction is 7alpha-hydroxy-3-oxochol-24-oyl-CoA + NAD(+) = 7alpha-hydroxy-3-oxochol-4-en-24-oyl-CoA + NADH + H(+). Its pathway is lipid metabolism; bile acid degradation. Functionally, stereo-specific NAD(H)-dependent 3-oxo-delta4-cholenoic acid oxidoreductase involved in bile acid 7alpha-dehydroxylation. This is 3-oxocholoyl-CoA 4-desaturase from Clostridium scindens (strain JCM 10418 / VPI 12708).